We begin with the raw amino-acid sequence, 248 residues long: tRNA pseudouridine synthase A (248 aa).

Aspartate 54 acts as the Nucleophile in catalysis. Tyrosine 112 provides a ligand contact to substrate.

The protein belongs to the tRNA pseudouridine synthase TruA family. Homodimer.

The catalysed reaction is uridine(38/39/40) in tRNA = pseudouridine(38/39/40) in tRNA. Functionally, formation of pseudouridine at positions 38, 39 and 40 in the anticodon stem and loop of transfer RNAs. The chain is tRNA pseudouridine synthase A from Geobacillus sp. (strain WCH70).